The primary structure comprises 56 residues: UPF0391 membrane protein Bd1438 (56 aa).

Helical transmembrane passes span alanine 4–alanine 24 and isoleucine 33–glycine 53.

Belongs to the UPF0391 family.

It localises to the cell membrane. In Bdellovibrio bacteriovorus (strain ATCC 15356 / DSM 50701 / NCIMB 9529 / HD100), this protein is UPF0391 membrane protein Bd1438.